The following is an 89-amino-acid chain: Small ribosomal subunit protein uS15 (89 aa).

This sequence belongs to the universal ribosomal protein uS15 family. Part of the 30S ribosomal subunit. Forms a bridge to the 50S subunit in the 70S ribosome, contacting the 23S rRNA.

Its function is as follows. One of the primary rRNA binding proteins, it binds directly to 16S rRNA where it helps nucleate assembly of the platform of the 30S subunit by binding and bridging several RNA helices of the 16S rRNA. Functionally, forms an intersubunit bridge (bridge B4) with the 23S rRNA of the 50S subunit in the ribosome. This chain is Small ribosomal subunit protein uS15, found in Saccharopolyspora erythraea (strain ATCC 11635 / DSM 40517 / JCM 4748 / NBRC 13426 / NCIMB 8594 / NRRL 2338).